A 304-amino-acid polypeptide reads, in one-letter code: Proline dehydrogenase 2 (304 aa).

Lys-97 is a binding site for substrate. Residue Asp-131 is part of the active site. FAD is bound by residues Met-132 and Gln-160. Residue Arg-181 is part of the active site. Residues 184-186 (KGA) and 223-224 (TH) contribute to the FAD site. 285–286 (RR) is a substrate binding site.

Belongs to the proline dehydrogenase family. The cofactor is FAD.

It catalyses the reaction L-proline + a quinone = (S)-1-pyrroline-5-carboxylate + a quinol + H(+). The protein operates within amino-acid degradation; L-proline degradation into L-glutamate; L-glutamate from L-proline: step 1/2. In terms of biological role, converts proline to delta-1-pyrroline-5-carboxylate. This Bacillus subtilis subsp. natto protein is Proline dehydrogenase 2.